A 46-amino-acid chain; its full sequence is uncharacterized protein (46 aa).

To equivalent protein in phage 82.

This is an uncharacterized protein from Escherichia coli (strain K12).